The chain runs to 723 residues: Polyribonucleotide nucleotidyltransferase (723 aa).

Positions 488 and 494 each coordinate Mg(2+). The KH domain occupies 555-614 (PKIITLNIKPEKIKDVIGPGGKQINAIIEETGVKIDIEQDGTVYIASQDQAMNRKAIAII). The S1 motif domain maps to 624–692 (GEVYTGKVRR…HQGRVNLSRK (69 aa)). Residues 692–723 (KALLEKKEQPEGDKKPQAEKKFYPKTKKPESK) form a disordered region. Over residues 693 to 723 (ALLEKKEQPEGDKKPQAEKKFYPKTKKPESK) the composition is skewed to basic and acidic residues.

The protein belongs to the polyribonucleotide nucleotidyltransferase family. Requires Mg(2+) as cofactor.

It localises to the cytoplasm. The catalysed reaction is RNA(n+1) + phosphate = RNA(n) + a ribonucleoside 5'-diphosphate. Involved in mRNA degradation. Catalyzes the phosphorolysis of single-stranded polyribonucleotides processively in the 3'- to 5'-direction. In Listeria innocua serovar 6a (strain ATCC BAA-680 / CLIP 11262), this protein is Polyribonucleotide nucleotidyltransferase.